Reading from the N-terminus, the 817-residue chain is Transcription factor SPT20 homolog-like 2 (817 aa).

A compositionally biased stretch (basic and acidic residues) spans 1-14 (MDRDLEQALDRTEN). Disordered stretches follow at residues 1–28 (MDRDLEQALDRTENITEIAQQRRPRRRY), 249–275 (PQQEQSDCPPPPELRVSTSGQKEERKV), 369–553 (PRKK…AAGR), 598–630 (PGSGAPAPAGISGSGLQSSGGPLPDARPGAVQA), and 675–697 (QLQQPTAAHPPQPGPQGSTLGLS). The segment covering 423-440 (SHSSSGPASVSQLSSWKT) has biased composition (polar residues). Low complexity-rich tracts occupy residues 469 to 479 (SSSGKISSGNS), 494 to 505 (PAAAPAVAAAAP), 513 to 531 (AAPALAAAAVAAAAGGAAP), and 598 to 618 (PGSGAPAPAGISGSGLQSSGG).

The protein belongs to the SPT20 family.

The protein is Transcription factor SPT20 homolog-like 2 (SUPT20HL2) of Homo sapiens (Human).